Here is a 216-residue protein sequence, read N- to C-terminus: MRLSDFYTALRLALVLPFFALYHMSRWVVMYFPAANVGRVVSIASVLLFLFIACTDFLDGYYARKSGKYSSFGKVFDPFADVIANVTVMLCLVADNFMPVFLFLCILYREFGMMFLRMLACGEGHVVGAQRMGKLKTASYMGAVLFSLLLKALYAFELAGADWYERMRAVGRLVYVVPVVLALASFFSYLKTFFPILKRVCGRTRYPVCKTCREWD.

Helical transmembrane passes span 40–60 (VVSIASVLLFLFIACTDFLDG), 88–108 (VMLCLVADNFMPVFLFLCILY), 141–161 (MGAVLFSLLLKALYAFELAGA), and 176–196 (VVPVVLALASFFSYLKTFFPI).

It belongs to the CDP-alcohol phosphatidyltransferase class-I family.

The protein localises to the cell membrane. It carries out the reaction a CDP-1,2-diacyl-sn-glycerol + sn-glycerol 3-phosphate = a 1,2-diacyl-sn-glycero-3-phospho-(1'-sn-glycero-3'-phosphate) + CMP + H(+). It participates in phospholipid metabolism; phosphatidylglycerol biosynthesis; phosphatidylglycerol from CDP-diacylglycerol: step 1/2. Its function is as follows. This protein catalyzes the committed step to the synthesis of the acidic phospholipids. The sequence is that of CDP-diacylglycerol--glycerol-3-phosphate 3-phosphatidyltransferase (pgsA) from Treponema pallidum (strain Nichols).